The chain runs to 479 residues: MAQHAVYFPDAFLTQMREAMPSTLSFDEFISACQRPLRRSIRINTLKISVADFLALIAPYGWSLTPIPWCHEGFWIERDDEEALPLGSTAEHLSGLFYIQEASSMLPVAALFADDNHPQRVMDMAAAPGSKTTQIAARMGNRGAILANEFSASRVKVLHANISRCGIANTALTHFDGRVFGAALPEMFDAILLDAPCSGEGVVRKDPDALKNWSPESNLDIAATQRELLDSAFHALRPGGTLVYSTCTLNRQENEEVCLWLKETYADAVEFLPLDDLFPDADRALTPEGFLHVFPQIYDCEGFFVARLRKISSLPAMPAPGYKVGTFPFTPLKGREALHVTQAANAVGLLWDENLHLWQREKEVWLFPAEIESLIGKVRFSRLGIKLAESHNKGYRWQHEATIALACPTHAHAFELSAQEAEEWYRGRDIYPQTPPAADDVLVTFQRQPLGLAKRIGSRIKNSYPRELVRDGKLFTGNS.

S-adenosyl-L-methionine-binding positions include A125 to K131, E149, D176, and D194. C247 serves as the catalytic Nucleophile.

This sequence belongs to the class I-like SAM-binding methyltransferase superfamily. RsmB/NOP family.

It is found in the cytoplasm. It catalyses the reaction cytidine(1407) in 16S rRNA + S-adenosyl-L-methionine = 5-methylcytidine(1407) in 16S rRNA + S-adenosyl-L-homocysteine + H(+). Its function is as follows. Specifically methylates the cytosine at position 1407 (m5C1407) of 16S rRNA. In Salmonella agona (strain SL483), this protein is Ribosomal RNA small subunit methyltransferase F.